An 881-amino-acid polypeptide reads, in one-letter code: DNA replication helicase (881 aa).

Residues 1–32 (MESADILPGSRGTVDRRCEGSEEKITPPRPVE) form a disordered region. The segment covering 13-32 (TVDRRCEGSEEKITPPRPVE) has biased composition (basic and acidic residues). 105 to 112 (GNAGSGKS) contacts ATP.

It belongs to the herpesviridae helicase family. Associates with the primase and the primase-associated factor to form the helicase-primase complex.

It localises to the host nucleus. Component of the helicase/primase complex. Unwinds the DNA at the replication forks and generates single-stranded DNA for both leading and lagging strand synthesis. The primase synthesizes short RNA primers on the lagging strand that the polymerase elongates using dNTPs. Possesses helicase-like motifs and therefore may act as the helicase subunit of the complex. The chain is DNA replication helicase from Equus caballus (Horse).